We begin with the raw amino-acid sequence, 144 residues long: Transcriptional regulator MraZ (144 aa).

SpoVT-AbrB domains follow at residues 5–47 and 77–120; these read TYTP…PRAE and TDEQ…DAQA.

It belongs to the MraZ family. In terms of assembly, forms oligomers.

The protein localises to the cytoplasm. The protein resides in the nucleoid. This Mycolicibacterium vanbaalenii (strain DSM 7251 / JCM 13017 / BCRC 16820 / KCTC 9966 / NRRL B-24157 / PYR-1) (Mycobacterium vanbaalenii) protein is Transcriptional regulator MraZ.